The primary structure comprises 506 residues: FAD-linked oxidoreductase aurO (506 aa).

The FAD-binding PCMH-type domain occupies isoleucine 92–methionine 260.

The protein belongs to the oxygen-dependent FAD-linked oxidoreductase family. In terms of assembly, might be part of an extracellular enzyme complex composed of GIP1, aurF, aurO and aurS. FAD serves as cofactor.

It localises to the secreted. It is found in the extracellular space. It functions in the pathway pigment biosynthesis. FAD-linked oxidoreductase; part of the gene cluster that mediates the biosynthesis of aurofusarin, a red mycelium pigment which is acting as a mycotoxin. The first step is performed by the polyketide synthase which condenses one acetyl-CoA and 6 malonyl-CoA units to form the first intermediate, the cyclic heptaketide and yellow pigment YWA1. The C2 hydroxyl group in the pyrone ring of YWA1 is probably formed during ring closure by an aldol-type cyclization reaction. The dehydratase aurZ then acts as the first tailoring enzyme in the aurofusarin biosynthetic pathway by converting YWA1 to nor-rubrofusarin. Nor-rubrofusarin is then methylated to rubrofusarin by the O-methyltransferase aurJ. Rubrofusarin is then transported across the plasma membrane by the rubrofusarin-specific pump aurT for further enzymatic processing by the extracellular complex composed of GIP1, aurF, aurO and aurS to yield aurofusarin. The chain is FAD-linked oxidoreductase aurO from Gibberella zeae (strain ATCC MYA-4620 / CBS 123657 / FGSC 9075 / NRRL 31084 / PH-1) (Wheat head blight fungus).